We begin with the raw amino-acid sequence, 168 residues long: MAPPEPLTALSRWYLYAIHGYFCEVMFTAAWDFVVNYNWKFPGVTSVWALFIYGTSILIVEKMYLYLKDKCNILIRCLIYTLWTYIWEFSTGLILRQFNACPWDYSQFDFDFMGLITLEYAIPWFCASFIMEQLVIRNTLRLRFDEHAEPGSPVMSTVSMANGHVKCN.

Residues M1 to Y14 lie on the Cytoplasmic side of the membrane. The chain crosses the membrane as a helical span at residues L15–V35. The Extracellular portion of the chain corresponds to N36–K40. The chain crosses the membrane as a helical span at residues F41–E61. Topologically, residues K62–N72 are cytoplasmic. A helical transmembrane segment spans residues I73–L93. Over I94–D109 the chain is Extracellular. The chain crosses the membrane as a helical span at residues F110–I130. Over M131–N168 the chain is Cytoplasmic.

This sequence belongs to the TMEM229 family.

It localises to the membrane. This chain is Transmembrane protein 229b (tmem229b), found in Xenopus tropicalis (Western clawed frog).